The primary structure comprises 611 residues: Phosphomethylpyrimidine synthase (611 aa).

Substrate-binding positions include N218, M247, Y276, H312, 332-334 (SRG), 373-376 (DGLR), and E412. Residue H416 coordinates Zn(2+). A substrate-binding site is contributed by Y439. H480 contributes to the Zn(2+) binding site. [4Fe-4S] cluster is bound by residues C560, C563, and C568.

The protein belongs to the ThiC family. Homodimer. [4Fe-4S] cluster serves as cofactor.

The enzyme catalyses 5-amino-1-(5-phospho-beta-D-ribosyl)imidazole + S-adenosyl-L-methionine = 4-amino-2-methyl-5-(phosphooxymethyl)pyrimidine + CO + 5'-deoxyadenosine + formate + L-methionine + 3 H(+). The protein operates within cofactor biosynthesis; thiamine diphosphate biosynthesis. Catalyzes the synthesis of the hydroxymethylpyrimidine phosphate (HMP-P) moiety of thiamine from aminoimidazole ribotide (AIR) in a radical S-adenosyl-L-methionine (SAM)-dependent reaction. The sequence is that of Phosphomethylpyrimidine synthase from Caulobacter sp. (strain K31).